Reading from the N-terminus, the 258-residue chain is Probable F-box protein At2g29610 (258 aa).

The tract at residues 1-25 (MVELSEIPGDPNGADPNNNPQEEDE) is disordered. Positions 8–20 (PGDPNGADPNNNP) are enriched in low complexity. The 47-residue stretch at 28–74 (LPILLQLPEELIERIIAHFPQCYSPSPILVCETFRQVINSDHFYYVT) folds into the F-box domain.

The sequence is that of Probable F-box protein At2g29610 from Arabidopsis thaliana (Mouse-ear cress).